We begin with the raw amino-acid sequence, 642 residues long: Threonine--tRNA ligase (642 aa).

The TGS domain maps to 1–61 (MPVITLPDGS…HEDASLSIIT (61 aa)). The segment at 243–534 (DHRKIGKQLD…LIEEYAGRFP (292 aa)) is catalytic. Zn(2+)-binding residues include Cys-334, His-385, and His-511.

Belongs to the class-II aminoacyl-tRNA synthetase family. As to quaternary structure, homodimer. Requires Zn(2+) as cofactor.

The protein resides in the cytoplasm. The enzyme catalyses tRNA(Thr) + L-threonine + ATP = L-threonyl-tRNA(Thr) + AMP + diphosphate + H(+). Functionally, catalyzes the attachment of threonine to tRNA(Thr) in a two-step reaction: L-threonine is first activated by ATP to form Thr-AMP and then transferred to the acceptor end of tRNA(Thr). Also edits incorrectly charged L-seryl-tRNA(Thr). The protein is Threonine--tRNA ligase of Shewanella amazonensis (strain ATCC BAA-1098 / SB2B).